A 245-amino-acid chain; its full sequence is Transmembrane and ubiquitin-like domain-containing protein 1 (245 aa).

The interval 2 to 30 (ALIEGVGDEVTVLFSVLACLLVLALAWVS) is required to release iHOPS from membranes. The helical transmembrane segment at 11-31 (VTVLFSVLACLLVLALAWVST) threads the bilayer. Over residues 34–51 (TESTDPLPQSSGTTTPAQ) the composition is skewed to polar residues. The segment at 34–100 (TESTDPLPQS…ASTPPDSPQE (67 aa)) is disordered. Phosphoserine occurs at positions 73, 97, and 126. One can recognise a Ubiquitin-like domain in the interval 102-175 (LLLRLKFLND…LHCHVSTRVG (74 aa)). Transmembrane regions (helical) follow at residues 194-214 (IGSL…YCQI) and 219-239 (FFPL…SLLA).

As to quaternary structure, interacts with EEF1A1, GRIA2, GRIP1. Interacts with CAMLG, TUBG1. Interacts with NPM1 and CDKN2A; TMUB1 can enhance interaction between NPM1 and CDKN2A and is proposed to bridge the proteins; proposed to be mediated by iHOPS. Interacts with ERLIN2 and AMFR; TMUB1 promotes the interaction of ERLIN2 with AMFR. In terms of processing, processed by regulated intramembrane proteolysis (RIP) in the N-terminus to release iHOPS from membranes.

The protein resides in the membrane. It localises to the postsynaptic cell membrane. Its subcellular location is the recycling endosome. It is found in the cytoplasm. The protein localises to the cytoskeleton. The protein resides in the microtubule organizing center. It localises to the centrosome. Its subcellular location is the nucleus. It is found in the nucleolus. Functionally, involved in sterol-regulated ubiquitination and degradation of HMG-CoA reductase HMGCR. Involved in positive regulation of AMPA-selective glutamate receptor GRIA2 recycling to the cell surface. Acts as a negative regulator of hepatocyte growth during regeneration. Its function is as follows. May contribute to the regulation of translation during cell-cycle progression. May contribute to the regulation of cell proliferation. May be involved in centrosome assembly. Modulates stabilization and nucleolar localization of tumor suppressor CDKN2A and enhances association between CDKN2A and NPM1. This Rattus norvegicus (Rat) protein is Transmembrane and ubiquitin-like domain-containing protein 1 (Tmub1).